A 493-amino-acid polypeptide reads, in one-letter code: Probable cytosol aminopeptidase (493 aa).

Mn(2+) contacts are provided by Lys262 and Asp267. The active site involves Lys274. The Mn(2+) site is built by Asp286, Asp345, and Glu347. The active site involves Arg349.

The protein belongs to the peptidase M17 family. Mn(2+) serves as cofactor.

Its subcellular location is the cytoplasm. The catalysed reaction is Release of an N-terminal amino acid, Xaa-|-Yaa-, in which Xaa is preferably Leu, but may be other amino acids including Pro although not Arg or Lys, and Yaa may be Pro. Amino acid amides and methyl esters are also readily hydrolyzed, but rates on arylamides are exceedingly low.. It carries out the reaction Release of an N-terminal amino acid, preferentially leucine, but not glutamic or aspartic acids.. In terms of biological role, presumably involved in the processing and regular turnover of intracellular proteins. Catalyzes the removal of unsubstituted N-terminal amino acids from various peptides. This chain is Probable cytosol aminopeptidase, found in Cyanothece sp. (strain PCC 7425 / ATCC 29141).